A 124-amino-acid chain; its full sequence is Large ribosomal subunit protein bL12 (124 aa).

It belongs to the bacterial ribosomal protein bL12 family. As to quaternary structure, homodimer. Part of the ribosomal stalk of the 50S ribosomal subunit. Forms a multimeric L10(L12)X complex, where L10 forms an elongated spine to which 2 to 4 L12 dimers bind in a sequential fashion. Binds GTP-bound translation factors.

Forms part of the ribosomal stalk which helps the ribosome interact with GTP-bound translation factors. Is thus essential for accurate translation. This chain is Large ribosomal subunit protein bL12, found in Paracoccus denitrificans (strain Pd 1222).